The following is a 328-amino-acid chain: Transcription initiation factor IIB 4 (328 aa).

2 stretches are compositionally biased toward basic and acidic residues: residues 1–12 and 21–32; these read MTNQRTTRDGSH and RSRESTDEDHGC. Residues 1–47 are disordered; the sequence is MTNQRTTRDGSHGTESVPTQRSRESTDEDHGCPECNGDLVTDEDRGE. A TFIIB-type zinc finger spans residues 28–58; it reads EDHGCPECNGDLVTDEDRGETTCGECGLVVE. Zn(2+) is bound by residues C32, C35, C50, and C53. Repeat copies occupy residues 144–227 and 238–319.

This sequence belongs to the TFIIB family.

Functionally, stabilizes TBP binding to an archaeal box-A promoter. Also responsible for recruiting RNA polymerase II to the pre-initiation complex (DNA-TBP-TFIIB). The chain is Transcription initiation factor IIB 4 from Halobacterium salinarum (strain ATCC 700922 / JCM 11081 / NRC-1) (Halobacterium halobium).